We begin with the raw amino-acid sequence, 214 residues long: MISSLRGTVLSVSGQTLLLEVHGVGYGVSVTPRHALELRNGSEATVLTSLVVREDSLTLFGFPGPDELRAFELLCGVTGVGPKSALAVLEHLDPEAMAQAVAAEDDAAFRRVSGIGPKTAKLIVLQLAGKLFVTQPRARSATSAASTVTADVVTALIGLGWSERVARTAVDDAAAAAADQGLPADMPRLLRVALGMLGPQQPAGAAPTGQAADR.

The tract at residues 1–63 (MISSLRGTVL…EDSLTLFGFP (63 aa)) is domain I. The segment at 64 to 139 (GPDELRAFEL…KLFVTQPRAR (76 aa)) is domain II. The interval 139 to 143 (RSATS) is flexible linker. The domain III stretch occupies residues 144 to 214 (AASTVTADVV…AAPTGQAADR (71 aa)).

Belongs to the RuvA family. As to quaternary structure, homotetramer. Forms an RuvA(8)-RuvB(12)-Holliday junction (HJ) complex. HJ DNA is sandwiched between 2 RuvA tetramers; dsDNA enters through RuvA and exits via RuvB. An RuvB hexamer assembles on each DNA strand where it exits the tetramer. Each RuvB hexamer is contacted by two RuvA subunits (via domain III) on 2 adjacent RuvB subunits; this complex drives branch migration. In the full resolvosome a probable DNA-RuvA(4)-RuvB(12)-RuvC(2) complex forms which resolves the HJ.

The protein localises to the cytoplasm. Its function is as follows. The RuvA-RuvB-RuvC complex processes Holliday junction (HJ) DNA during genetic recombination and DNA repair, while the RuvA-RuvB complex plays an important role in the rescue of blocked DNA replication forks via replication fork reversal (RFR). RuvA specifically binds to HJ cruciform DNA, conferring on it an open structure. The RuvB hexamer acts as an ATP-dependent pump, pulling dsDNA into and through the RuvAB complex. HJ branch migration allows RuvC to scan DNA until it finds its consensus sequence, where it cleaves and resolves the cruciform DNA. This chain is Holliday junction branch migration complex subunit RuvA, found in Clavibacter michiganensis subsp. michiganensis (strain NCPPB 382).